The chain runs to 395 residues: Fractalkine (395 aa).

An N-terminal signal peptide occupies residues 1–24; sequence MAPSPLAWLLRLAAFFHLCTLLPG. The chemokine and involved in interaction with ITGAV:ITGB3 and ITGA4:ITGB1 stretch occupies residues 25–100; sequence QHLGMTKCEI…HQAAALTKNG (76 aa). The Extracellular segment spans residues 25–336; that stretch reads QHLGMTKCEI…TPVPDTQAAT (312 aa). 2 disulfides stabilise this stretch: Cys-32/Cys-58 and Cys-36/Cys-74. The tract at residues 101-336 is mucin-like stalk; it reads GKFEKRVDNV…TPVPDTQAAT (236 aa). Polar residues-rich tracts occupy residues 148–172 and 201–210; these read ARGT…TSEA and AVYQSGSSSW. Disordered stretches follow at residues 148–180 and 201–305; these read ARGT…LTAK and AVYQ…SGSQ. Residues 218 to 236 show a composition bias toward low complexity; sequence SPSTTAPSPQVSTTSPSTP. The chain crosses the membrane as a helical span at residues 337 to 357; that stretch reads RRQAVGLLAFLGLLFCLGVAM. Topologically, residues 358-395 are cytoplasmic; sequence FAYQSLQGCPRKMAGEMVEGLRYVPRSCGSNSYVLVPV.

This sequence belongs to the intercrine delta family. As to quaternary structure, monomer. Forms a ternary complex with CX3CR1 and ITGAV:ITGB3 or ITGA4:ITGB1. Post-translationally, a soluble short 80 kDa form may be released by proteolytic cleavage from the long membrane-anchored form. In terms of tissue distribution, highest levels in brain. Lower levels in kidney, heart and lung. Also found in skeletal muscle and testis. Highly expressed in lesional smooth muscle cells, but not macrophages. Low levels of ABCD-3 mRNA were also found in anti-CD40-stimulated splenic B-cells, but not in resting B-cells. Also expressed in dendritic cells.

Its subcellular location is the cell membrane. It localises to the secreted. Chemokine that acts as a ligand for both CX3CR1 and integrins ITGAV:ITGB3 and ITGA4:ITGB1. The CX3CR1-CX3CL1 signaling exerts distinct functions in different tissue compartments, such as immune response, inflammation, cell adhesion and chemotaxis. Regulates leukocyte adhesion and migration processes at the endothelium. Can activate integrins in both a CX3CR1-dependent and CX3CR1-independent manner. In the presence of CX3CR1, activates integrins by binding to the classical ligand-binding site (site 1) in integrins. In the absence of CX3CR1, binds to a second site (site 2) in integrins which is distinct from site 1 and enhances the binding of other integrin ligands to site 1. Functionally, the soluble form is chemotactic for T-cells and monocytes, but not for neutrophils. Its function is as follows. The membrane-bound form promotes adhesion of those leukocytes to endothelial cells. The sequence is that of Fractalkine from Mus musculus (Mouse).